A 173-amino-acid chain; its full sequence is MGRTRENKATVISDVQELFQDAQMTVIIDYQGLTVAEITDLRNRLRPLGGTCKIAKNTLVRRALAGQEAWSPMEEFLTGTTAILVLKEDLGGAIKAYKKFQKDTKKTELRGGVLEGKSLTQADVEAIGDLPSKEQLMGQIAGGINALATKIALGIKEVPASVARGLQAHVDKE.

The protein belongs to the universal ribosomal protein uL10 family. As to quaternary structure, part of the ribosomal stalk of the 50S ribosomal subunit. The N-terminus interacts with L11 and the large rRNA to form the base of the stalk. The C-terminus forms an elongated spine to which L12 dimers bind in a sequential fashion forming a multimeric L10(L12)X complex.

In terms of biological role, forms part of the ribosomal stalk, playing a central role in the interaction of the ribosome with GTP-bound translation factors. In Synechocystis sp. (strain ATCC 27184 / PCC 6803 / Kazusa), this protein is Large ribosomal subunit protein uL10 (rplJ).